The primary structure comprises 386 residues: Interleukin-13 receptor subunit alpha-2 (386 aa).

A signal peptide spans 1–21; that stretch reads MAFIHLDVGFLYTLLVCTAFG. Over 22-338 the chain is Extracellular; that stretch reads SMLSNAEIKV…CWKGDIWKET (317 aa). 3 Fibronectin type-III domains span residues 33 to 133, 138 to 234, and 239 to 338; these read PPQD…SPQG, KIQD…LQNI, and PPDY…WKET. Cysteines 64 and 112 form a disulfide. Asparagine 114 is a glycosylation site (N-linked (GlcNAc...) asparagine). 2 disulfides stabilise this stretch: cysteine 144/cysteine 154 and cysteine 183/cysteine 196. N-linked (GlcNAc...) asparagine glycans are attached at residues asparagine 214 and asparagine 298. A disulfide bridge links cysteine 268 with cysteine 315. Residues 321 to 325 carry the WSXWS motif motif; it reads WSEWS. A helical membrane pass occupies residues 339-359; sequence LVFFLIPFAFVSIFVLVITCL. Residues 360–386 lie on the Cytoplasmic side of the membrane; sequence LLYKQRALLKTIFHTKKEVFSHQDTFC.

It belongs to the type I cytokine receptor family. Type 5 subfamily. As to quaternary structure, interacts with IL4RA. Interacts with high affinity to interleukin-13 (IL13), but not to interleukin-4 (IL4). Cleaved by MMP8 leading to a soluble form that is also able to interact with IL13. Expressed in kidney, placenta, liver, skeletal muscle and thymus. Expression was not seen in whole blood and heart.

It localises to the cell membrane. Cell surface receptor that plays a role in the regulation of IL-13-mediated responses. Functions as a decoy receptor that inhibits IL-13- and IL-4-mediated signal transduction via the JAK-STAT pathway and thereby modulates immune responses and inflammation. Serves as a functional signaling receptor for IL-13 in an alternative pathway involving AP-1 ultimately leading to the production of TGFB1. The polypeptide is Interleukin-13 receptor subunit alpha-2 (IL13RA2) (Canis lupus familiaris (Dog)).